The sequence spans 331 residues: Ketol-acid reductoisomerase (NADP(+)) (331 aa).

Residues 2 to 182 (AKLFYDSDAD…GGTRAGILET (181 aa)) form the KARI N-terminal Rossmann domain. NADP(+) contacts are provided by residues 25–28 (YGSQ), Ser-51, Ser-53, and 83–86 (DEFQ). His-108 is an active-site residue. Gly-134 provides a ligand contact to NADP(+). The 146-residue stretch at 183–328 (NFKEETETDL…KTLRSMFSWL (146 aa)) folds into the KARI C-terminal knotted domain. The Mg(2+) site is built by Asp-191, Glu-195, Glu-227, and Glu-231. Residue Ser-252 coordinates substrate.

The protein belongs to the ketol-acid reductoisomerase family. The cofactor is Mg(2+).

It carries out the reaction (2R)-2,3-dihydroxy-3-methylbutanoate + NADP(+) = (2S)-2-acetolactate + NADPH + H(+). The catalysed reaction is (2R,3R)-2,3-dihydroxy-3-methylpentanoate + NADP(+) = (S)-2-ethyl-2-hydroxy-3-oxobutanoate + NADPH + H(+). It participates in amino-acid biosynthesis; L-isoleucine biosynthesis; L-isoleucine from 2-oxobutanoate: step 2/4. It functions in the pathway amino-acid biosynthesis; L-valine biosynthesis; L-valine from pyruvate: step 2/4. Its function is as follows. Involved in the biosynthesis of branched-chain amino acids (BCAA). Catalyzes an alkyl-migration followed by a ketol-acid reduction of (S)-2-acetolactate (S2AL) to yield (R)-2,3-dihydroxy-isovalerate. In the isomerase reaction, S2AL is rearranged via a Mg-dependent methyl migration to produce 3-hydroxy-3-methyl-2-ketobutyrate (HMKB). In the reductase reaction, this 2-ketoacid undergoes a metal-dependent reduction by NADPH to yield (R)-2,3-dihydroxy-isovalerate. The protein is Ketol-acid reductoisomerase (NADP(+)) of Prochlorococcus marinus (strain NATL2A).